Consider the following 269-residue polypeptide: HTH-type transcriptional regulator Rv0792c (269 aa).

The HTH gntR-type domain maps to 20-88 (VPASTQLAEA…QGLGTFVADP (69 aa)). The segment at residues 48–67 (ERELIDRSGLSRVTVRAAVG) is a DNA-binding region (H-T-H motif).

Homodimer.

DNA-binding activity is increased in the presence of L-arabinose and inhibited by the small molecule I-OMe-Tyrphostin. Transcriptional regulator required for survival in oxidative stress and for establishing infection in host tissues. Regulates the expression of a subset of genes involved in oxidative stress adaptation and virulence, enabling the bacteria to adapt and persist in host tissues. The sequence is that of HTH-type transcriptional regulator Rv0792c from Mycobacterium tuberculosis (strain ATCC 25618 / H37Rv).